We begin with the raw amino-acid sequence, 371 residues long: Glycosyltransferase 8 domain-containing protein 1 (371 aa).

Residues 1-7 (MSFRKVN) lie on the Cytoplasmic side of the membrane. Residues 8–28 (IVILVLAVALFLLVLHHNFLG) traverse the membrane as a helical; Signal-anchor for type II membrane protein segment. At 29 to 371 (LSSLLRNEVS…RRHVEISNTK (343 aa)) the chain is on the lumenal side. Asparagine 103 and asparagine 257 each carry an N-linked (GlcNAc...) asparagine glycan.

This sequence belongs to the glycosyltransferase 8 family.

Its subcellular location is the membrane. This Bos taurus (Bovine) protein is Glycosyltransferase 8 domain-containing protein 1 (GLT8D1).